A 223-amino-acid polypeptide reads, in one-letter code: von Willebrand factor C domain-containing protein 2-like (223 aa).

Residues 1–21 (MGPFLPAICVVLLALNAAVSP) form the signal peptide. VWFC domains lie at 51-110 (KGCV…PECK) and 114-172 (NFCE…PICK).

The protein resides in the secreted. It is found in the synapse. Its function is as follows. May play a role in bone differentiation and matrix mineralization. May play a role in neural development. The sequence is that of von Willebrand factor C domain-containing protein 2-like (vwc2l) from Danio rerio (Zebrafish).